Consider the following 685-residue polypeptide: MTRSPCSTTSRWISSMSTSEYRAVDAESDLPISAAELAALASQLYAASIRPGPDSPPQQAPVAPRGSVPDATAATSAGRTAAGTADVYPGPVPQVGGRDVYLPPPASPAPEAPPQAAPPAPRGSAPDATAATSAGRAAAGTSDVYSSWVPQLGVADIYLGAPTPAGPEAPPQSAPPAPRGQVPDTTAAATAYGADLSAFAVPTGIVSTAPGVQAGTAPPVPVVPRAATAPSWLPEAPSVADLGWSDAPAPDAPAGDEHDYHFLTKTDPVPQFRDEHEVFDVAAIRSDFPILKETVNGKPLIWFDNAATTQKPQVVIDRLSHFYAHENSNIHRAAHELAARATDAYEEARDTVAEFIGAPSSDNIVFVRGTTEAINLVAHAWGAKHLQPGDEIVITHLEHHANIVPWQLISQKTGAILKVAPIDDAGNLLLSEFEGLLGPRTKLVAASHVSNALGTVMPVDKIVELGHRYGARVLIDGAQSIQHIPIDVAELGADFFVFSGHKIYGPTGIGALYGTEEALTETPPWQGGGHMIADVTLERSLYQGPPTKFEAGTGNIADAVGLTEALRYVQRLGVERIAAYEHALLEYATPRLADIPGVRLIGTAQEKASVLSFVLAGHEPLEVGKALNAEGIAVRAGHHCAQPALRRLGLEATVRPSFAFYNTFEEIDVFLRAVRRIAEGGANVG.

The cargo-loading domain stretch occupies residues 1–282 (MTRSPCSTTS…RDEHEVFDVA (282 aa)). Disordered stretches follow at residues 48–135 (SIRP…TSAG) and 162–185 (PTPA…VPDT). Over residues 71-85 (ATAATSAGRTAAGTA) the composition is skewed to low complexity. The segment covering 102–121 (LPPPASPAPEAPPQAAPPAP) has biased composition (pro residues). The span at 122-135 (RGSAPDATAATSAG) shows a compositional bias: low complexity. A compositionally biased stretch (pro residues) spans 164 to 178 (PAGPEAPPQSAPPAP). Lys-502 carries the N6-(pyridoxal phosphate)lysine modification. Catalysis depends on Cys-640, which acts as the Cysteine persulfide intermediate.

This sequence belongs to the class-V pyridoxal-phosphate-dependent aminotransferase family. Csd subfamily. As to quaternary structure, isolated from bacteria in a complex with encapsulin 2A (AC I3NID5), strongly suggesting it is found in a type 2A encapsulin nanocompartment. There are 1-2 copies of this protein in each encapsulin shell. Requires pyridoxal 5'-phosphate as cofactor.

It is found in the encapsulin nanocompartment. Its subcellular location is the cell membrane. It carries out the reaction (sulfur carrier)-H + L-cysteine = (sulfur carrier)-SH + L-alanine. Functionally, cargo protein of a type 2A encapsulin nanocompartment involved in sulfur metabolism. Cysteine desulfurases mobilize the sulfur from L-cysteine to yield L-alanine, an essential step in sulfur metabolism for biosynthesis of a variety of sulfur-containing biomolecules. This Mycolicibacterium paratuberculosis (strain ATCC BAA-968 / K-10) (Mycobacterium paratuberculosis) protein is Probable cysteine desulfurase.